Reading from the N-terminus, the 216-residue chain is GTP cyclohydrolase 1 2 (216 aa).

It belongs to the GTP cyclohydrolase I family. Homomer.

The enzyme catalyses GTP + H2O = 7,8-dihydroneopterin 3'-triphosphate + formate + H(+). It functions in the pathway cofactor biosynthesis; 7,8-dihydroneopterin triphosphate biosynthesis; 7,8-dihydroneopterin triphosphate from GTP: step 1/1. This chain is GTP cyclohydrolase 1 2 (folE2), found in Nostoc sp. (strain PCC 7120 / SAG 25.82 / UTEX 2576).